Here is a 327-residue protein sequence, read N- to C-terminus: GTPase Obg (327 aa).

Positions 2–160 (HLFKDSLNLI…LNLRLELSLI (159 aa)) constitute an Obg domain. The 166-residue stretch at 161–326 (ADIGLVGLPN…LVSEFFSLVK (166 aa)) folds into the OBG-type G domain. Residues 167 to 174 (GLPNAGKS), 192 to 196 (FTTKI), 213 to 216 (DLPG), 280 to 283 (SKLD), and 307 to 309 (SIY) each bind GTP. Residues serine 174 and threonine 194 each contribute to the Mg(2+) site.

It belongs to the TRAFAC class OBG-HflX-like GTPase superfamily. OBG GTPase family. As to quaternary structure, monomer. The cofactor is Mg(2+).

It is found in the cytoplasm. Its function is as follows. An essential GTPase which binds GTP, GDP and possibly (p)ppGpp with moderate affinity, with high nucleotide exchange rates and a fairly low GTP hydrolysis rate. Plays a role in control of the cell cycle, stress response, ribosome biogenesis and in those bacteria that undergo differentiation, in morphogenesis control. This chain is GTPase Obg, found in Borrelia duttonii (strain Ly).